Here is a 145-residue protein sequence, read N- to C-terminus: Androgenic gland hormone (145 aa).

Residues 1-21 (MKGLLFIVSLLCLTLHQRVWA) form the signal peptide. 4 disulfides stabilise this stretch: Cys33–Cys122, Cys42–Cys59, Cys44–Cys140, and Cys123–Cys131. The propeptide at 68-112 (SADDEDYLFEEDEDDEFFHPRALSPPAAKSGDERLEDEVSFHSRS) is c peptide. Residue Asn132 is glycosylated (N-linked (GlcNAc...) asparagine).

Androgenic gland.

The protein resides in the secreted. Controls sex differentiation and the formation of male appendages, spermatogenesis, pigmentation, and male specific behavior. This chain is Androgenic gland hormone (AGH), found in Porcellio scaber (Common rough woodlouse).